A 258-amino-acid chain; its full sequence is Imidazole glycerol phosphate synthase subunit HisF (258 aa).

Active-site residues include D11 and D130.

The protein belongs to the HisA/HisF family. In terms of assembly, heterodimer of HisH and HisF.

The protein resides in the cytoplasm. It catalyses the reaction 5-[(5-phospho-1-deoxy-D-ribulos-1-ylimino)methylamino]-1-(5-phospho-beta-D-ribosyl)imidazole-4-carboxamide + L-glutamine = D-erythro-1-(imidazol-4-yl)glycerol 3-phosphate + 5-amino-1-(5-phospho-beta-D-ribosyl)imidazole-4-carboxamide + L-glutamate + H(+). The protein operates within amino-acid biosynthesis; L-histidine biosynthesis; L-histidine from 5-phospho-alpha-D-ribose 1-diphosphate: step 5/9. IGPS catalyzes the conversion of PRFAR and glutamine to IGP, AICAR and glutamate. The HisF subunit catalyzes the cyclization activity that produces IGP and AICAR from PRFAR using the ammonia provided by the HisH subunit. This Escherichia coli O127:H6 (strain E2348/69 / EPEC) protein is Imidazole glycerol phosphate synthase subunit HisF.